The primary structure comprises 328 residues: Malate dehydrogenase (328 aa).

Residue 13 to 19 participates in NAD(+) binding; it reads GGTGQIA. Substrate-binding residues include Arg-94 and Arg-100. Residues Asn-107, Gln-114, and 131–133 contribute to the NAD(+) site; that span reads VGN. 2 residues coordinate substrate: Asn-133 and Arg-164. His-189 functions as the Proton acceptor in the catalytic mechanism.

The protein belongs to the LDH/MDH superfamily. MDH type 2 family.

The catalysed reaction is (S)-malate + NAD(+) = oxaloacetate + NADH + H(+). Functionally, catalyzes the reversible oxidation of malate to oxaloacetate. This is Malate dehydrogenase from Chlamydia felis (strain Fe/C-56) (Chlamydophila felis).